Consider the following 229-residue polypeptide: AA9 family lytic polysaccharide monooxygenase E (229 aa).

A signal peptide spans 1 to 19 (MRSSDITFVLLSVVATVRS). Position 20 (His20) interacts with Cu(2+). A disulfide bond links Cys57 and Cys178. N-linked (GlcNAc...) asparagine glycosylation is present at Asn76. His99 contributes to the Cu(2+) binding site. The O2 site is built by His164 and Gln173. A Cu(2+)-binding site is contributed by Tyr175. Asn217 is a glycosylation site (N-linked (GlcNAc...) asparagine).

The protein belongs to the polysaccharide monooxygenase AA9 family. The cofactor is Cu(2+).

The protein localises to the secreted. It catalyses the reaction [(1-&gt;4)-beta-D-glucosyl]n+m + reduced acceptor + O2 = 4-dehydro-beta-D-glucosyl-[(1-&gt;4)-beta-D-glucosyl]n-1 + [(1-&gt;4)-beta-D-glucosyl]m + acceptor + H2O.. Lytic polysaccharide monooxygenase (LPMO) that depolymerizes crystalline and amorphous polysaccharides via the oxidation of scissile alpha- or beta-(1-4)-glycosidic bonds, yielding C1 and C4 oxidation products. Catalysis by LPMOs requires the reduction of the active-site copper from Cu(II) to Cu(I) by a reducing agent and H(2)O(2) or O(2) as a cosubstrate. The polypeptide is AA9 family lytic polysaccharide monooxygenase E (Botryotinia fuckeliana (strain B05.10) (Noble rot fungus)).